We begin with the raw amino-acid sequence, 344 residues long: Tetraacyldisaccharide 4'-kinase (344 aa).

Histidine 65–threonine 72 serves as a coordination point for ATP.

It belongs to the LpxK family.

The catalysed reaction is a lipid A disaccharide + ATP = a lipid IVA + ADP + H(+). Its pathway is glycolipid biosynthesis; lipid IV(A) biosynthesis; lipid IV(A) from (3R)-3-hydroxytetradecanoyl-[acyl-carrier-protein] and UDP-N-acetyl-alpha-D-glucosamine: step 6/6. Functionally, transfers the gamma-phosphate of ATP to the 4'-position of a tetraacyldisaccharide 1-phosphate intermediate (termed DS-1-P) to form tetraacyldisaccharide 1,4'-bis-phosphate (lipid IVA). The sequence is that of Tetraacyldisaccharide 4'-kinase from Neisseria meningitidis serogroup A / serotype 4A (strain DSM 15465 / Z2491).